The chain runs to 63 residues: Large ribosomal subunit protein uL29 (63 aa).

Belongs to the universal ribosomal protein uL29 family.

The sequence is that of Large ribosomal subunit protein uL29 from Pseudoalteromonas translucida (strain TAC 125).